A 176-amino-acid polypeptide reads, in one-letter code: Calcineurin subunit B type 2 (176 aa).

Gly2 is lipidated: N-myristoyl glycine. EF-hand domains are found at residues 18 to 53, 57 to 85, 87 to 122, and 128 to 163; these read DEIK…QQNP, RVID…FSVK, DEEQ…MVGN, and QLQQ…MEIH. Ca(2+)-binding residues include Asp31, Asp33, Ser35, Ser37, Glu42, Asp63, Asp65, Asn67, Glu69, Glu74, Asp100, Asp102, Asp104, and Glu111. The tract at residues 131–136 is calcineurin A binding; sequence QLVDKS. Asp141, Asp143, Asp145, Arg147, and Glu152 together coordinate Ca(2+).

This sequence belongs to the calcineurin regulatory subunit family. As to quaternary structure, forms a complex composed of a calmodulin-dependent catalytic subunit (also known as calcineurin A) and a regulatory Ca(2+)-binding subunit (also known as calcineurin B). There are three catalytic subunits, each encoded by a separate gene (PPP3CA, PPP3CB, and PPP3CC) and two regulatory subunits which are also encoded by separate genes (PPP3R1 and PPP3R2). Interacts with SPATA33 (via PQIIIT motif). Testis specific.

Its subcellular location is the mitochondrion. Functionally, regulatory subunit of calcineurin, a calcium-dependent, calmodulin stimulated protein phosphatase. Confers calcium sensitivity. This chain is Calcineurin subunit B type 2 (Ppp3r2), found in Rattus norvegicus (Rat).